The chain runs to 222 residues: Small ribosomal subunit protein uS3 (222 aa).

The 70-residue stretch at 39 to 108 (IRKFVKNKLS…NVLINIVEVK (70 aa)) folds into the KH type-2 domain.

This sequence belongs to the universal ribosomal protein uS3 family. As to quaternary structure, part of the 30S ribosomal subunit. Forms a tight complex with proteins S10 and S14.

Binds the lower part of the 30S subunit head. Binds mRNA in the 70S ribosome, positioning it for translation. In Clostridium acetobutylicum (strain ATCC 824 / DSM 792 / JCM 1419 / IAM 19013 / LMG 5710 / NBRC 13948 / NRRL B-527 / VKM B-1787 / 2291 / W), this protein is Small ribosomal subunit protein uS3.